Here is a 123-residue protein sequence, read N- to C-terminus: Putative iron-sulfur cluster insertion protein ErpA (123 aa).

Cys51, Cys115, and Cys117 together coordinate iron-sulfur cluster.

This sequence belongs to the HesB/IscA family. As to quaternary structure, homodimer. Requires iron-sulfur cluster as cofactor.

In terms of biological role, required for insertion of 4Fe-4S clusters. This chain is Putative iron-sulfur cluster insertion protein ErpA, found in Bordetella bronchiseptica (strain ATCC BAA-588 / NCTC 13252 / RB50) (Alcaligenes bronchisepticus).